A 273-amino-acid polypeptide reads, in one-letter code: ATP synthase subunit a (273 aa).

Transmembrane regions (helical) follow at residues 41-61, 101-121, 122-142, 143-163, 183-203, 221-241, and 247-267; these read ILNI…LLIF, LIAP…LMDL, LAVD…ALRV, VPSA…ILII, PFNH…SLLS, LVFI…ISVP, and IIVI…YIAM.

It belongs to the ATPase A chain family. As to quaternary structure, F-type ATPases have 2 components, CF(1) - the catalytic core - and CF(0) - the membrane proton channel. CF(1) has five subunits: alpha(3), beta(3), gamma(1), delta(1), epsilon(1). CF(0) has three main subunits: a(1), b(2) and c(9-12). The alpha and beta chains form an alternating ring which encloses part of the gamma chain. CF(1) is attached to CF(0) by a central stalk formed by the gamma and epsilon chains, while a peripheral stalk is formed by the delta and b chains.

Its subcellular location is the cell membrane. In terms of biological role, key component of the proton channel; it plays a direct role in the translocation of protons across the membrane. This Baumannia cicadellinicola subsp. Homalodisca coagulata protein is ATP synthase subunit a.